The chain runs to 153 residues: MINQGLFIRVNNFQLLKASLAYKKASNILTFPPIRTSTKHGGGSSKNTGDSAGRRLGIKRSENQFVRAGEILIRQRGTKFHPGDNTGLGKDHTIYSLVSGYVKFFQMDVSLRKRRKYVGVVFDKETTLPRPKDEPTIRRVNKYITSANSAQVS.

The transit peptide at 1–37 directs the protein to the mitochondrion; that stretch reads MINQGLFIRVNNFQLLKASLAYKKASNILTFPPIRTS. A disordered region spans residues 34-57; that stretch reads IRTSTKHGGGSSKNTGDSAGRRLG.

This sequence belongs to the bacterial ribosomal protein bL27 family. As to quaternary structure, component of the mitochondrial large ribosomal subunit (mt-LSU). Mature yeast 74S mitochondrial ribosomes consist of a small (37S) and a large (54S) subunit. The 37S small subunit contains a 15S ribosomal RNA (15S mt-rRNA) and at least 32 different proteins. The 54S large subunit contains a 21S rRNA (21S mt-rRNA) and at least 45 different proteins.

It localises to the mitochondrion. Functionally, component of the mitochondrial ribosome (mitoribosome), a dedicated translation machinery responsible for the synthesis of mitochondrial genome-encoded proteins, including at least some of the essential transmembrane subunits of the mitochondrial respiratory chain. The mitoribosomes are attached to the mitochondrial inner membrane and translation products are cotranslationally integrated into the membrane. The sequence is that of Large ribosomal subunit protein bL27m (mrp7) from Schizosaccharomyces pombe (strain 972 / ATCC 24843) (Fission yeast).